The chain runs to 45 residues: uncharacterized protein (45 aa).

Basic and acidic residues predominate over residues 1–26 (MIMGKDRQEKKLKASGRVESDRDQSI). Positions 1 to 45 (MIMGKDRQEKKLKASGRVESDRDQSIHYDGATSLEQNGRFKKRKS) are disordered.

This is an uncharacterized protein from Bacillus subtilis (strain 168).